The primary structure comprises 462 residues: GTPase Der (462 aa).

EngA-type G domains are found at residues 9–171 (KTIA…NLNQ) and 201–372 (IQVG…ECFS). GTP-binding positions include 15–22 (GQPNVGKS), 62–66 (DTGGM), 123–126 (NKID), 207–214 (GRVNVGKS), 254–258 (DTAGI), and 318–321 (NKWD). The region spanning 373 to 457 (KRIPTSLLNS…PLILNAKDKK (85 aa)) is the KH-like domain.

This sequence belongs to the TRAFAC class TrmE-Era-EngA-EngB-Septin-like GTPase superfamily. EngA (Der) GTPase family. In terms of assembly, associates with the 50S ribosomal subunit.

In terms of biological role, GTPase that plays an essential role in the late steps of ribosome biogenesis. The sequence is that of GTPase Der from Helicobacter pylori (strain P12).